The sequence spans 350 residues: Phenylalanine--tRNA ligase alpha subunit (350 aa).

E262 serves as a coordination point for Mg(2+).

It belongs to the class-II aminoacyl-tRNA synthetase family. Phe-tRNA synthetase alpha subunit type 1 subfamily. As to quaternary structure, tetramer of two alpha and two beta subunits. The cofactor is Mg(2+).

The protein localises to the cytoplasm. The enzyme catalyses tRNA(Phe) + L-phenylalanine + ATP = L-phenylalanyl-tRNA(Phe) + AMP + diphosphate + H(+). This chain is Phenylalanine--tRNA ligase alpha subunit (pheS), found in Thermus thermophilus (strain ATCC 27634 / DSM 579 / HB8).